The sequence spans 372 residues: Queuine tRNA-ribosyltransferase (372 aa).

Asp92 (proton acceptor) is an active-site residue. Substrate contacts are provided by residues 92 to 96 (DSGGF), Asp146, Gln188, and Gly215. The tract at residues 246–252 (GIGTLRE) is RNA binding. The active-site Nucleophile is Asp265. The RNA binding; important for wobble base 34 recognition stretch occupies residues 270–274 (TRLGR). Cys303, Cys305, Cys308, and His334 together coordinate Zn(2+).

This sequence belongs to the queuine tRNA-ribosyltransferase family. In terms of assembly, homodimer. Within each dimer, one monomer is responsible for RNA recognition and catalysis, while the other monomer binds to the replacement base PreQ1. Zn(2+) is required as a cofactor.

The enzyme catalyses 7-aminomethyl-7-carbaguanine + guanosine(34) in tRNA = 7-aminomethyl-7-carbaguanosine(34) in tRNA + guanine. It functions in the pathway tRNA modification; tRNA-queuosine biosynthesis. In terms of biological role, catalyzes the base-exchange of a guanine (G) residue with the queuine precursor 7-aminomethyl-7-deazaguanine (PreQ1) at position 34 (anticodon wobble position) in tRNAs with GU(N) anticodons (tRNA-Asp, -Asn, -His and -Tyr). Catalysis occurs through a double-displacement mechanism. The nucleophile active site attacks the C1' of nucleotide 34 to detach the guanine base from the RNA, forming a covalent enzyme-RNA intermediate. The proton acceptor active site deprotonates the incoming PreQ1, allowing a nucleophilic attack on the C1' of the ribose to form the product. After dissociation, two additional enzymatic reactions on the tRNA convert PreQ1 to queuine (Q), resulting in the hypermodified nucleoside queuosine (7-(((4,5-cis-dihydroxy-2-cyclopenten-1-yl)amino)methyl)-7-deazaguanosine). This is Queuine tRNA-ribosyltransferase from Prochlorococcus marinus (strain MIT 9313).